The primary structure comprises 259 residues: Ribosomal RNA small subunit methyltransferase J (259 aa).

Residues 101–102 (RD), 117–118 (ER), 153–154 (SS), and Asp-176 contribute to the S-adenosyl-L-methionine site.

The protein belongs to the methyltransferase superfamily. RsmJ family.

Its subcellular location is the cytoplasm. It carries out the reaction guanosine(1516) in 16S rRNA + S-adenosyl-L-methionine = N(2)-methylguanosine(1516) in 16S rRNA + S-adenosyl-L-homocysteine + H(+). Specifically methylates the guanosine in position 1516 of 16S rRNA. The polypeptide is Ribosomal RNA small subunit methyltransferase J (Aliivibrio fischeri (strain MJ11) (Vibrio fischeri)).